The following is a 405-amino-acid chain: Argininosuccinate synthase (405 aa).

ATP is bound at residue 12 to 20; the sequence is AYSGGLDTS. Tyrosine 92 and serine 97 together coordinate L-citrulline. Glycine 122 serves as a coordination point for ATP. Residues threonine 124, asparagine 128, and aspartate 129 each coordinate L-aspartate. L-citrulline is bound at residue asparagine 128. L-citrulline is bound by residues arginine 132, serine 181, serine 190, glutamate 266, and tyrosine 278.

It belongs to the argininosuccinate synthase family. Type 1 subfamily. As to quaternary structure, homotetramer.

It localises to the cytoplasm. It catalyses the reaction L-citrulline + L-aspartate + ATP = 2-(N(omega)-L-arginino)succinate + AMP + diphosphate + H(+). The protein operates within amino-acid biosynthesis; L-arginine biosynthesis; L-arginine from L-ornithine and carbamoyl phosphate: step 2/3. This Cronobacter sakazakii (strain ATCC BAA-894) (Enterobacter sakazakii) protein is Argininosuccinate synthase.